A 375-amino-acid polypeptide reads, in one-letter code: GDP-mannose-dependent alpha-mannosyltransferase (375 aa).

This sequence belongs to the glycosyltransferase group 1 family. Glycosyltransferase 4 subfamily.

Its pathway is phospholipid metabolism; phosphatidylinositol metabolism. Catalyzes the addition of a mannose residue from GDP-D-mannose to GlcAGroAc2 to generate 1,2-di-O-C16/C18:1-(alpha-D-mannopyranosyl)-(1-4)-(alpha-D-glucopyranosyluronic acid)-(1-3)-glycerol(ManGlcAGroAc2). The sequence is that of GDP-mannose-dependent alpha-mannosyltransferase (mgtA) from Mycolicibacterium smegmatis (strain ATCC 700084 / mc(2)155) (Mycobacterium smegmatis).